The primary structure comprises 486 residues: Fructose dehydrogenase cytochrome subunit (486 aa).

Residues 1-25 form the signal peptide; that stretch reads MRYFRPLSATAMTTVLLLAGTNVRA. Cytochrome c domains lie at 38 to 142, 186 to 294, and 330 to 423; these read PSIS…MTEV, DDWN…RSVP, and TKTT…LSHF. Heme c contacts are provided by cysteine 52, cysteine 55, histidine 56, cysteine 201, cysteine 204, histidine 205, cysteine 343, cysteine 346, and histidine 347. Residues 458–478 form a helical membrane-spanning segment; that stretch reads LLGTGGILGAILVVAGLWWLI.

In terms of assembly, heterotrimer composed of FdhL, FdhS and FdhC. Post-translationally, binds 3 heme c groups covalently per subunit.

Its subcellular location is the cell membrane. In terms of biological role, cytochrome subunit of fructose dehydrogenase, an enzyme that catalyzes the oxidation of D-fructose to produce 5-keto-D-fructose. In the complex, mediates both the electron transfer to ubiquinone and the anchoring of the complex to the membrane. The sequence is that of Fructose dehydrogenase cytochrome subunit (fdhC) from Gluconobacter japonicus.